Here is a 433-residue protein sequence, read N- to C-terminus: Homogentisate 1,2-dioxygenase (433 aa).

H288 (proton acceptor) is an active-site residue. Fe cation is bound by residues H331 and E337. Homogentisate is bound by residues Y346 and H367. H367 contributes to the Fe cation binding site.

This sequence belongs to the homogentisate dioxygenase family. In terms of assembly, hexamer; dimer of trimers. Fe cation serves as cofactor.

The catalysed reaction is homogentisate + O2 = 4-maleylacetoacetate + H(+). It functions in the pathway amino-acid degradation; L-phenylalanine degradation; acetoacetate and fumarate from L-phenylalanine: step 4/6. Involved in the catabolism of homogentisate (2,5-dihydroxyphenylacetate or 2,5-OH-PhAc), a central intermediate in the degradation of phenylalanine and tyrosine. Catalyzes the oxidative ring cleavage of the aromatic ring of homogentisate to yield maleylacetoacetate. In Pseudomonas putida (strain ATCC 700007 / DSM 6899 / JCM 31910 / BCRC 17059 / LMG 24140 / F1), this protein is Homogentisate 1,2-dioxygenase.